The sequence spans 449 residues: Guanine/hypoxanthine permease GhxP (449 aa).

Residues 1 to 25 are Cytoplasmic-facing; it reads MSTPSARTGGSLDAWFKISQRGSTV. The helical transmembrane segment at 26–49 threads the bilayer; it reads RQEVVAGLTTFLAMVYSVIVVPGM. The Periplasmic portion of the chain corresponds to 50 to 59; it reads LGKAGFPPAA. A helical transmembrane segment spans residues 60–78; it reads VFVATCLVAGLGSIVMGLW. Residues 79 to 80 are Cytoplasmic-facing; the sequence is AN. A discontinuously helical membrane pass occupies residues 81-97; sequence LPLAIGCAISLTAFTAF. Residues 98-109 are Periplasmic-facing; that stretch reads SLVLGQHISVPV. A helical transmembrane segment spans residues 110 to 129; it reads ALGAVFLMGVLFTVISATGI. The Cytoplasmic portion of the chain corresponds to 130-141; it reads RSWILRNLPHGV. A helical membrane pass occupies residues 142 to 162; sequence AHGTGIGIGLFLLLIAANGVG. The Periplasmic portion of the chain corresponds to 163–180; sequence LVIKNPLDGLPVALGDFA. A helical transmembrane segment spans residues 181–198; that stretch reads TFPVIMSLVGLAVIIGLE. The Cytoplasmic segment spans residues 199 to 202; the sequence is KLKV. The helical transmembrane segment at 203–222 threads the bilayer; sequence PGGILLTIIGISIVGLIFDP. Residues 223–254 are Periplasmic-facing; sequence NVHFSGVFAMPSLSDENGNSLIGSLDIMGALN. The helical transmembrane segment at 255–283 threads the bilayer; that stretch reads PVVLPSVLALVMTAVFDATGTIRAVAGQA. Residues 284 to 296 lie on the Cytoplasmic side of the membrane; the sequence is NLLDKDGQIIDGG. A helical transmembrane segment spans residues 297 to 312; the sequence is KALTTDSMSSVFSGLV. Topologically, residues 313–314 are periplasmic; sequence GA. Residues 315–330 form a discontinuously helical membrane-spanning segment; it reads APAAVYIESAAGTAAG. Residues 331–334 are Cytoplasmic-facing; sequence GKTG. A helical membrane pass occupies residues 335–349; sequence LTAITVGVLFLLILF. At 350–360 the chain is on the periplasmic side; the sequence is LSPLSYLVPGY. Residues 361–380 form a helical membrane-spanning segment; it reads ATAPALMYVGLLMLSNVAKI. Over 381-385 the chain is Cytoplasmic; it reads DFADF. An intramembrane region (discontinuously helical) is located at residues 386-421; it reads VDAMAGLVTAVFIVLTCNIVTGIMIGFATLVIGRLV. Topologically, residues 422 to 449 are cytoplasmic; it reads SGEWRKLNIGTVVIAVALVTFYAGGWAI.

This sequence belongs to the nucleobase:cation symporter-2 (NCS2) (TC 2.A.40) family. Azg-like subfamily.

Its subcellular location is the cell inner membrane. High-affinity transporter for guanine and hypoxanthine. The protein is Guanine/hypoxanthine permease GhxP (ghxP) of Escherichia coli O157:H7.